A 2671-amino-acid chain; its full sequence is Inositol 1,4,5-trisphosphate-gated calcium channel ITPR3 (2671 aa).

At 1–2202 (MSEMSSFLHI…LIYWFSRRMT (2202 aa)) the chain is on the cytoplasmic side. 5 MIR domains span residues 113–173 (GDVV…LRSN), 174–224 (GDNV…INLF), 232–288 (EEVL…VEVV), 295–372 (GGAG…LDPT), and 378–434 (DSFV…IVSV). 1D-myo-inositol 1,4,5-trisphosphate contacts are provided by R266, T268, L269, and R270. The interval 322–342 (SYKGDASDPKAAGMGAQGRTG) is disordered. Residues R503, K507, R510, Y567, R568, and K569 each contribute to the 1D-myo-inositol 1,4,5-trisphosphate site. Residue R743 participates in Ca(2+) binding. Phosphoserine is present on residues S916 and S934. Residues E1122 and E1125 each coordinate Ca(2+). Disordered regions lie at residues 1132 to 1163 (GSGKGEEVEAGAAKDKKERPTDEEGFLHPPGE) and 1809 to 1848 (NDLGSQPHEDREPVDPTTKGRVASFSIPGSSSRYSLGPSL). Residues S1813, S1832, and S1834 each carry the phosphoserine modification. The Ca(2+) site is built by E1882 and E1946. Residues A1996, E2149, and K2152 each coordinate ATP. Residues 2203 to 2223 (LWGSISFNLAVFINIIIAFFY) traverse the membrane as a helical segment. Residues 2224-2235 (PYMEGASTGVLD) are Extracellular-facing. The chain crosses the membrane as a helical span at residues 2236–2256 (SPLISLLFWILICFSIAALFT). Residues 2257 to 2264 (KRYSIRPL) are Cytoplasmic-facing. Residues 2265-2285 (IVALILRSIYYLGIGPTLNIL) traverse the membrane as a helical segment. Residues 2286–2325 (GALNLTNKIVFVVSFVGNRGTFIRGYKAMVMDMEFLYHVG) are Extracellular-facing. The helical transmembrane segment at 2326–2346 (YILTSVLGLFAHELFYSILLF) threads the bilayer. Over 2347 to 2368 (DLIYREETLFNVIKSVTRNGRS) the chain is Cytoplasmic. The chain crosses the membrane as a helical span at residues 2369 to 2389 (ILLTALLALILVYLFSIVGFL). At 2390 to 2496 (FLKDDFILEV…ESLFPARVVY (107 aa)) the chain is on the extracellular side. A disulfide bond links C2455 and C2461. Residues 2497 to 2517 (DLLFFFIVIIIVLNLIFGVII) traverse the membrane as a helical segment. Topologically, residues 2518 to 2671 (DTFADLRSEK…FVDVQNCISR (154 aa)) are cytoplasmic. Residues C2538 and F2539 each contribute to the ATP site. A Zn(2+)-binding site is contributed by C2538. C2541 and H2558 together coordinate Zn(2+). K2560, H2563, N2564, and M2565 together coordinate ATP. H2563 is a Zn(2+) binding site. Residue T2581 participates in Ca(2+) binding. Phosphoserine is present on residues S2609 and S2670.

This sequence belongs to the InsP3 receptor family. As to quaternary structure, homotetramer. Homodimer. Interacts with TRPC1, TRPC3 and TRPC4. Interacts with TRPV4. Interacts with SIGMAR1. Interacts with PML and AKT1. Interacts with IRAG2 (via coiled-coil domain). Interacts with CABP1. Interacts with TMBIM4/LFG4. Interacts with CEMIP. Interacts with TESPA1. Interacts with TMEM203. Interacts with BOK; regulates ITPR3 expression. Interacts with BCL2L10. Interacts with CHGA and CHGB. In terms of processing, phosphorylated by AKT1 on serine and/or threonine residues. Expressed in intestinal crypt and villus epithelial cells.

It localises to the endoplasmic reticulum membrane. The protein localises to the cytoplasmic vesicle. It is found in the secretory vesicle membrane. The catalysed reaction is Ca(2+)(in) = Ca(2+)(out). Its activity is regulated as follows. Inositol 1,4,5-trisphosphate-gated calcium channel is regulated by cytosolic calcium in a biphasic manner. At low concentrations, cytosolic calcium binds at a high-affinity juxtamembrane domain (JD) calcium binding site, allowing ITPR3 to activate by escaping a low-energy resting state through an ensemble of preactivated states. At high cytosolic calcium concentrations, ITPR3 preferentially enters an inhibited state stabilized by calcium binding at a second, low-affinity cytoplasmic domain (CD) calcium binding site. Functionally, inositol 1,4,5-trisphosphate-gated calcium channel that, upon 1D-myo-inositol 1,4,5-trisphosphate binding, transports calcium from the endoplasmic reticulum lumen to cytoplasm, thus releasing the intracellular calcium and therefore participates in cellular calcium ion homeostasis. 1D-myo-inositol 1,4,5-trisphosphate binds to the ligand-free channel without altering its global conformation, yielding the low-energy resting state, then progresses through resting-to preactivated transitions to the higher energy preactivated state, which increases affinity for calcium, promoting binding of the low basal cytosolic calcium at the juxtamembrane domain (JD) site, favoring the transition through the ensemble of high-energy intermediate states along the trajectory to the fully-open activated state. Upon opening, releases calcium in the cytosol where it can bind to the low-affinity cytoplasmic domain (CD) site and stabilizes the inhibited state to terminate calcium release. This is Inositol 1,4,5-trisphosphate-gated calcium channel ITPR3 from Homo sapiens (Human).